We begin with the raw amino-acid sequence, 94 residues long: MAPKKIGAGKGDSSILAKISNYDIVSQGRRAACDAVYVSKKLLKSTGKAAWIAGTTFLILAVPLILELEQDHRLGEIDFEQASLLGTPPVGAML.

Over 1-48 (MAPKKIGAGKGDSSILAKISNYDIVSQGRRAACDAVYVSKKLLKSTGK) the chain is Cytoplasmic. The helical transmembrane segment at 49–66 (AAWIAGTTFLILAVPLIL) threads the bilayer. Residues 67–94 (ELEQDHRLGEIDFEQASLLGTPPVGAML) are Mitochondrial intermembrane-facing.

This sequence belongs to the Tom22 family. As to quaternary structure, forms part of the preprotein translocase complex of the outer mitochondrial membrane (TOM complex) which consists of at least 6 different proteins (TOM5, TOM6, TOM7, TOM20, TOM22/TOM9 and TOM40). In terms of tissue distribution, expressed in roots, flowers, young cotyledons and leaves.

It is found in the mitochondrion outer membrane. Central component of the receptor complex responsible for the recognition and translocation of cytosolically synthesized mitochondrial preproteins. Together with TOM20 functions as the transit peptide receptor at the surface of the mitochondrion outer membrane and facilitates the movement of preproteins into the translocation pore. This chain is Mitochondrial import receptor subunit TOM9-1 (TOM9-1), found in Arabidopsis thaliana (Mouse-ear cress).